An 861-amino-acid polypeptide reads, in one-letter code: Leucine--tRNA ligase (861 aa).

Positions 42 to 52 (PYPSGKLHMGH) match the 'HIGH' region motif. Positions 620-624 (KMSKS) match the 'KMSKS' region motif. Lys-623 lines the ATP pocket.

Belongs to the class-I aminoacyl-tRNA synthetase family.

Its subcellular location is the cytoplasm. The enzyme catalyses tRNA(Leu) + L-leucine + ATP = L-leucyl-tRNA(Leu) + AMP + diphosphate. This is Leucine--tRNA ligase from Buchnera aphidicola subsp. Schizaphis graminum (strain Sg).